Here is a 588-residue protein sequence, read N- to C-terminus: Sperm-associated microtubule inner protein 4 (588 aa).

The residue at position 219 (Thr219) is a Phosphothreonine. Phosphoserine occurs at positions 224, 406, 421, 427, and 437. Phosphotyrosine is present on Tyr441. Phosphoserine is present on residues Ser457 and Ser484. Thr512 is modified (phosphothreonine). Ser516 carries the post-translational modification Phosphoserine. Lys543 is covalently cross-linked (Glycyl lysine isopeptide (Lys-Gly) (interchain with G-Cter in SUMO2)). Phosphoserine is present on Ser545.

The protein resides in the cytoplasm. The protein localises to the cytoskeleton. It is found in the microtubule organizing center. It localises to the centrosome. Its subcellular location is the flagellum axoneme. Functionally, microtubule inner protein (MIP) part of the dynein-decorated doublet microtubules (DMTs) in flagellum axoneme. May serve to reinforce and thus stabilize the microtubule structure in the sperm flagella. The chain is Sperm-associated microtubule inner protein 4 (Spmip4) from Rattus norvegicus (Rat).